The following is a 215-amino-acid chain: Redox-sensing transcriptional repressor Rex (215 aa).

Positions 18-57 (LYYRFLKNLHASGKQRVSSAELSEAVKVDPATIRRDFSYF) form a DNA-binding region, H-T-H motif. 92–97 (GVGNLG) serves as a coordination point for NAD(+).

The protein belongs to the transcriptional regulatory Rex family. As to quaternary structure, homodimer.

The protein resides in the cytoplasm. Its function is as follows. Modulates transcription in response to changes in cellular NADH/NAD(+) redox state. This chain is Redox-sensing transcriptional repressor Rex, found in Geobacillus sp. (strain WCH70).